Consider the following 532-residue polypeptide: Calnexin homolog 2 (532 aa).

Positions 1–25 (MRERIITFVSLLLVALLSFPSVSYC) are cleaved as a signal peptide. Residues 26 to 468 (DDQTILYESF…EKAETQPNLT (443 aa)) are Lumenal-facing. Ca(2+) contacts are provided by Ser34 and Asp65. Cys110 and Cys145 form a disulfide bridge. Tyr114, Lys116, Tyr136, and Asp143 together coordinate an alpha-D-glucoside. Residues 208 to 302 (NLLSAEDFEP…DEEDGEWEAP (95 aa)) are disordered. Positions 225-358 (IPDPEDKKPE…RDIPNPDYFE (134 aa)) are p domain (Extended arm). Residues 226 to 242 (PDPEDKKPEDWDERAKI) show a composition bias toward basic and acidic residues. Repeat copies occupy residues 227-238 (DPEDKKPEDWDE), 244-255 (DPNAVKPDDWDE), 263-274 (DEEAEKPEGWLD), 282-293 (DPEASKPEDWDD), and 297-307 (GEWEAPKVSNT). 4 X approximate repeats stretches follow at residues 227–293 (DPED…DWDD) and 297–354 (GEWE…IPNP). 2 stretches are compositionally biased toward acidic residues: residues 252-283 (DWDE…VEDP) and 290-299 (DWDDEEDGEW). Cys309 and Cys315 are oxidised to a cystine. 3 repeat units span residues 316–326 (GEWKRPMKRNP), 330–340 (GKWSSPLIDNP), and 344–354 (GIWKPRDIPNP). An an alpha-D-glucoside-binding site is contributed by Glu373. Asp384 is a Ca(2+) binding site. A glycan (N-linked (GlcNAc...) asparagine) is linked at Asn466. Residues 469-489 (IGVLISIVIVFLSLFFKLIFG) traverse the membrane as a helical segment. Over 490 to 532 (GAKAKVEKKKPETAAETSTSEAKTEEKAEAVAAPRKRQTRRES) the chain is Cytoplasmic. A disordered region spans residues 493-532 (AKVEKKKPETAAETSTSEAKTEEKAEAVAAPRKRQTRRES). A compositionally biased stretch (basic residues) spans 523–532 (PRKRQTRRES).

Belongs to the calreticulin family.

It localises to the endoplasmic reticulum membrane. Calcium-binding protein that interacts with newly synthesized monoglucosylated glycoproteins in the endoplasmic reticulum. It may act in assisting protein assembly and/or in the retention within the ER of unassembled protein subunits. It seems to play a major role in the quality control apparatus of the ER by the retention of incorrectly folded proteins. The polypeptide is Calnexin homolog 2 (Arabidopsis thaliana (Mouse-ear cress)).